The chain runs to 302 residues: Possible hemolysin C (302 aa).

CBS domains are found at residues M79–L141 and L144–E201.

It belongs to the UPF0053 family. Hemolysin C subfamily.

This chain is Possible hemolysin C (tlyC), found in Rickettsia bellii (strain OSU 85-389).